The sequence spans 280 residues: Shikimate dehydrogenase (NADP(+)) (280 aa).

Residues 23-25 (SLS) and T70 each bind shikimate. The active-site Proton acceptor is the K74. Shikimate is bound by residues N95 and D111. NADP(+) contacts are provided by residues 135–139 (GSGGA), 158–163 (NRTISK), and I221. Y223 contributes to the shikimate binding site. G247 contacts NADP(+).

The protein belongs to the shikimate dehydrogenase family. As to quaternary structure, homodimer.

It catalyses the reaction shikimate + NADP(+) = 3-dehydroshikimate + NADPH + H(+). It functions in the pathway metabolic intermediate biosynthesis; chorismate biosynthesis; chorismate from D-erythrose 4-phosphate and phosphoenolpyruvate: step 4/7. Involved in the biosynthesis of the chorismate, which leads to the biosynthesis of aromatic amino acids. Catalyzes the reversible NADPH linked reduction of 3-dehydroshikimate (DHSA) to yield shikimate (SA). This is Shikimate dehydrogenase (NADP(+)) from Buchnera aphidicola subsp. Cinara cedri (strain Cc).